Reading from the N-terminus, the 180-residue chain is Large ribosomal subunit protein uL6 (180 aa).

The protein belongs to the universal ribosomal protein uL6 family. As to quaternary structure, part of the 50S ribosomal subunit.

Functionally, this protein binds to the 23S rRNA, and is important in its secondary structure. It is located near the subunit interface in the base of the L7/L12 stalk, and near the tRNA binding site of the peptidyltransferase center. The sequence is that of Large ribosomal subunit protein uL6 from Anaeromyxobacter dehalogenans (strain 2CP-C).